A 257-amino-acid chain; its full sequence is High affinity immunoglobulin epsilon receptor subunit alpha (257 aa).

The signal sequence occupies residues 1-25 (MAPAMESPTLLCVALLFFAPDGVLA). Topologically, residues 26–205 (VPQKPKVSLN…KAPREKYWLQ (180 aa)) are extracellular. 2 consecutive Ig-like domains span residues 30-110 (PKVS…EVFS) and 111-193 (DWLL…LNIT). 7 N-linked (GlcNAc...) asparagine glycosylation sites follow: Asn-46, Asn-67, Asn-75, Asn-99, Asn-160, Asn-165, and Asn-191. Cys-51 and Cys-93 are disulfide-bonded. A disulfide bond links Cys-132 and Cys-176. A helical membrane pass occupies residues 206–224 (FFIPLLVVILFAVDTGLFI). The Cytoplasmic segment spans residues 225–257 (STQQQVTFLLKIKRTRKGFRLLNPHPKPNPKNN).

Tetramer of an alpha chain, a beta chain, and two disulfide linked gamma chains. Interacts with IGHE (via CH3 region). Expressed in eosinophils.

It is found in the cell membrane. High-affinity receptor for immunoglobulin epsilon/IgE. Mediates IgE effector functions in myeloid cells. Upon IgE binding and antigen/allergen cross-linking initiates signaling pathways that lead to myeloid cell activation and differentiation. On mast cells, basophils and eosinophils stimulates the secretion of vasoactive amines, lipid mediators and cytokines that contribute to inflammatory response, tissue remodeling and cytotoxicity against microbes. Triggers the immediate hypersensitivity response to allergens as a host defense mechanism against helminth parasites, pathogenic bacteria and venom toxicity. When dysregulated, it can elicit harmful life-threatening allergic and anaphylactic reactions. This is High affinity immunoglobulin epsilon receptor subunit alpha (FCER1A) from Homo sapiens (Human).